Consider the following 139-residue polypeptide: Putative nickel-responsive regulator (139 aa).

4 residues coordinate Ni(2+): H79, H90, H92, and C98.

This sequence belongs to the transcriptional regulatory CopG/NikR family. Ni(2+) serves as cofactor.

In terms of biological role, transcriptional regulator. This is Putative nickel-responsive regulator from Geotalea uraniireducens (strain Rf4) (Geobacter uraniireducens).